The primary structure comprises 436 residues: Amino acid transporter AVT3C (436 aa).

The span at 1-13 (MGFQNEASSSSYT) shows a compositional bias: polar residues. The segment at 1-21 (MGFQNEASSSSYTLKIPPPAR) is disordered. At 1–38 (MGFQNEASSSSYTLKIPPPAREDSPLLGKGPPLSSQFK) the chain is on the cytoplasmic side. The helical transmembrane segment at 39-59 (TFANVFIAVVGAGVLGLPYAF) threads the bilayer. Residues 60-65 (KRTGWL) are Vacuolar-facing. Residues 66–86 (MGVLLLVSVSVLTHHCMMLLV) traverse the membrane as a helical segment. At 87 to 118 (YTRRKLDSFNAGISKIGSFGDLGFAVCGSLGR) the chain is on the cytoplasmic side. Residues 119–139 (IVVDLFIILSQAGFCVGYLIF) traverse the membrane as a helical segment. At 140-166 (IGTTLANLSDPESPTSLRHQFTRLGSE) the chain is on the vacuolar side. A helical transmembrane segment spans residues 167 to 187 (FLGVSSKSLYIWGCFPFQLGL). Over 188–195 (NSIKTLTH) the chain is Cytoplasmic. The helical transmembrane segment at 196–216 (LAPLSIFADIVDLGAMAVVIV) threads the bilayer. At 217 to 228 (EDSMIILKQRPD) the chain is on the vacuolar side. Residues 229–249 (VVAFGGMSLFLYGMGVAVYSF) traverse the membrane as a helical segment. The Cytoplasmic segment spans residues 250-273 (EGVGMVLPLESEMKDKDKFGKVLA). The helical transmembrane segment at 274 to 294 (LGMGFISLIYIAFGILGYLAF) threads the bilayer. At 295 to 309 (GEDTMDIITANLGAG) the chain is on the vacuolar side. Residues 310 to 330 (LVSTVVQLGLCINLFFTFPLM) form a helical membrane-spanning segment. Topologically, residues 331 to 352 (MNPVFEIVERRFSRGMYSAWLR) are cytoplasmic. A helical membrane pass occupies residues 353–373 (WVLVLAVTLVALFVPNFADFL). Residues 374-376 (SLV) lie on the Vacuolar side of the membrane. A helical transmembrane segment spans residues 377–397 (GSSTCCVLGFVLPALFHLLVF). Topologically, residues 398 to 411 (KEEMGWLQWSSDTA) are cytoplasmic. Residues 412 to 432 (IVVLGVVLAVSGTWSSLSEIF) traverse the membrane as a helical segment. Residues 433–436 (SVKV) are Vacuolar-facing.

The protein belongs to the amino acid/polyamine transporter 2 family. Amino acid/auxin permease (AAAP) (TC 2.A.18.8) subfamily. As to expression, ubiquitous.

Its subcellular location is the vacuole membrane. Functionally, translocates preferentially neutral amino acids from the vacuole to the cytoplasm. This chain is Amino acid transporter AVT3C, found in Arabidopsis thaliana (Mouse-ear cress).